Here is an 891-residue protein sequence, read N- to C-terminus: MNKHHPKLRSFYSIRKSTLGVASVIVSTLFLITSQHQAQAAENTNTSDKISENQNNNATTTQQPKDTNQTQPATQPVITAKNYPAADESLKDAIKDPALENKEHDIGPREQVNFQLLDKNNETQYYHFFSIKDPADVYYTKKKAEVELDINTASTWKKFEVYENNQKLPVRLVSYSPVPEDHAYIRFPVSDGTQELKIVSSTQIDDGEETNYDYTKLVFAKPIYNDPSLVKSDTNDAVVTNDQSSSDASNQTNTNTSNQNTSTTNNANNQPQATTNMSQPAQPKSSANADQASSQPAHETNSNGNTNDKTNESSNQSDVNQQYPPADESLQDAIKNPAIIDKEHTADNWRPIDFQMKNDKGERQFYHYASTVEPATVIFTKTGPVIELGLKTASTWKKFEVYEGDKKLPVELVSYDSDKDYAYIRFPVSNGTRDVKNVSSIEYGENIHEDYDYTLMVFAQPITNNPDDYVDEETYNLQKLLAPYHKAKTLERQVYELEKLQEKLPEKYKAEYKKKLDQTRVELADQVKSAVTEFENVTPTNDQLTDLQEAHFVVFESEENSESVMDGFVEHPFYTATLNGQKYVVMKTKDDSYWKDLIVEGKRVTTVSKDPKNNSRTLIFPYIPDKAVYNAIVKVVVANIGYEGQYHVRIINQDINTKDDDTSQNNTSEPLNVQTGQEGKVADTDVAENSSTATNPKDASDKADVIEPESDVVKDADNNIDKDVQHDVDHLSDMSDNNHFDKYDLKEMDTQIAKDTDRNVDNSVGMSSNVDTDKDSNKNKDKVIQLAHIADKNNHTGKAAKLDVVKQNYNNTDKVTDKKTTEHLPSDIHKTVDKTVKTKEKAGTPSKENKLSQSKMLPKTGETTSSQSWWGLYALLGMLALFIPKFRKESK.

Residues 1–40 (MNKHHPKLRSFYSIRKSTLGVASVIVSTLFLITSQHQAQA) form the signal peptide. Positions 42–77 (ENTNTSDKISENQNNNATTTQQPKDTNQTQPATQPV) are disordered. Residues 53 to 63 (NQNNNATTTQQ) are compositionally biased toward low complexity. A compositionally biased stretch (polar residues) spans 64–77 (PKDTNQTQPATQPV). Positions 105-232 (DIGPREQVNF…IYNDPSLVKS (128 aa)) constitute an NEAT 1 domain. The interval 239-324 (VTNDQSSSDA…NQSDVNQQYP (86 aa)) is disordered. Residues 240 to 276 (TNDQSSSDASNQTNTNTSNQNTSTTNNANNQPQATTN) show a composition bias toward low complexity. Over residues 277–323 (MSQPAQPKSSANADQASSQPAHETNSNGNTNDKTNESSNQSDVNQQY) the composition is skewed to polar residues. NEAT domains are found at residues 345–471 (TADN…DYVD) and 543–660 (QLTD…TKDD). 3 disordered regions span residues 657–718 (TKDD…DADN), 752–777 (IAKD…KDSN), and 835–864 (TVKT…GETT). 2 stretches are compositionally biased toward polar residues: residues 663–677 (SQNN…QTGQ) and 687–697 (AENSSTATNPK). Residues 698–718 (DASDKADVIEPESDVVKDADN) show a composition bias toward basic and acidic residues. Over residues 835–850 (TVKTKEKAGTPSKENK) the composition is skewed to basic and acidic residues. Residues 851 to 864 (LSQSKMLPKTGETT) are compositionally biased toward polar residues. Positions 857-861 (LPKTG) match the LPXTG sorting signal motif. A Pentaglycyl murein peptidoglycan amidated threonine modification is found at Thr-860. A propeptide spans 861–891 (GETTSSQSWWGLYALLGMLALFIPKFRKESK) (removed by sortase).

Belongs to the IsdH family.

Its subcellular location is the secreted. It is found in the cell wall. Its function is as follows. Binds human plasma haptoglobin-hemoglobin complexes, haptoglobin and hemoglobin. Binds haptoglobin-hemoglobin complexes with significantly higher affinity than haptoglobin alone. This Staphylococcus aureus (strain N315) protein is Iron-regulated surface determinant protein H (isdH).